The chain runs to 107 residues: Nucleoid-associated protein GbCGDNIH1_0260 (107 aa).

The protein belongs to the YbaB/EbfC family. As to quaternary structure, homodimer.

Its subcellular location is the cytoplasm. It localises to the nucleoid. In terms of biological role, binds to DNA and alters its conformation. May be involved in regulation of gene expression, nucleoid organization and DNA protection. In Granulibacter bethesdensis (strain ATCC BAA-1260 / CGDNIH1), this protein is Nucleoid-associated protein GbCGDNIH1_0260.